Consider the following 142-residue polypeptide: Large ribosomal subunit protein uL11 (142 aa).

Belongs to the universal ribosomal protein uL11 family. In terms of assembly, part of the ribosomal stalk of the 50S ribosomal subunit. Interacts with L10 and the large rRNA to form the base of the stalk. L10 forms an elongated spine to which L12 dimers bind in a sequential fashion forming a multimeric L10(L12)X complex. Post-translationally, one or more lysine residues are methylated.

Functionally, forms part of the ribosomal stalk which helps the ribosome interact with GTP-bound translation factors. This chain is Large ribosomal subunit protein uL11, found in Edwardsiella ictaluri (strain 93-146).